The chain runs to 255 residues: Small ribosomal subunit protein uS2 (255 aa).

It belongs to the universal ribosomal protein uS2 family.

In Streptococcus pyogenes serotype M49 (strain NZ131), this protein is Small ribosomal subunit protein uS2.